Reading from the N-terminus, the 203-residue chain is Tic20 family protein Ycf60 (203 aa).

5 helical membrane passes run 2 to 22, 51 to 71, 84 to 104, 131 to 151, and 153 to 173; these read IRLF…RLAL, TVPY…YVLP, IILP…VTFF, ILLF…PIEF, and ISFL…STIT.

This sequence belongs to the Tic20 family.

Its subcellular location is the plastid. It localises to the chloroplast membrane. This is Tic20 family protein Ycf60 (ycf60) from Pyropia yezoensis (Susabi-nori).